Here is a 213-residue protein sequence, read N- to C-terminus: NADH dehydrogenase [ubiquinone] iron-sulfur protein 7, mitochondrial (213 aa).

The N-terminal 37 residues, 1 to 37, are a transit peptide targeting the mitochondrion; the sequence is MAVLSAPGLRGFRILGLRSSVGPAVQARSVHQSVATD. Residues 30 to 44 show a composition bias toward polar residues; it reads VHQSVATDGPSSTQP. The tract at residues 30 to 53 is disordered; sequence VHQSVATDGPSSTQPALPKARAVA. The [4Fe-4S] cluster site is built by Cys-88 and Cys-89. Arg-111 carries the hydroxyarginine modification. Residues Cys-153 and Cys-183 each contribute to the [4Fe-4S] cluster site.

This sequence belongs to the complex I 20 kDa subunit family. Core subunit of respiratory chain NADH dehydrogenase (Complex I) which is composed of 45 different subunits. This is a component of the iron-sulfur (IP) fragment of the enzyme. The cofactor is [4Fe-4S] cluster. Post-translationally, hydroxylated ar Arg-111 by NDUFAF5 early in the pathway of assembly of complex I, before the formation of the juncture between peripheral and membrane arms.

The protein resides in the mitochondrion inner membrane. The catalysed reaction is a ubiquinone + NADH + 5 H(+)(in) = a ubiquinol + NAD(+) + 4 H(+)(out). In terms of biological role, core subunit of the mitochondrial membrane respiratory chain NADH dehydrogenase (Complex I) which catalyzes electron transfer from NADH through the respiratory chain, using ubiquinone as an electron acceptor. Essential for the catalytic activity of complex I. The polypeptide is NADH dehydrogenase [ubiquinone] iron-sulfur protein 7, mitochondrial (NDUFS7) (Pan troglodytes (Chimpanzee)).